The following is a 127-amino-acid chain: Fluoride-specific ion channel FluC (127 aa).

The next 4 helical transmembrane spans lie at 7-27, 37-57, 70-90, and 102-122; these read LFLISCGASLGAMSRHGLTLL, FGTLIANYIGCLIMGIMLAMF, FFVTGFLGSLTTFSAFSAEVI, and ITITSLHILGCLFFTTLGVFI. Positions 77 and 80 each coordinate Na(+).

It belongs to the fluoride channel Fluc/FEX (TC 1.A.43) family.

It localises to the cell inner membrane. It carries out the reaction fluoride(in) = fluoride(out). Its activity is regulated as follows. Na(+) is not transported, but it plays an essential structural role and its presence is essential for fluoride channel function. In terms of biological role, fluoride-specific ion channel. Important for reducing fluoride concentration in the cell, thus reducing its toxicity. The polypeptide is Fluoride-specific ion channel FluC (Histophilus somni (strain 129Pt) (Haemophilus somnus)).